The primary structure comprises 24 residues: Brevinin-1Ba (24 aa).

Cys18 and Cys24 are disulfide-bonded.

Expressed by the skin glands.

The protein resides in the secreted. Antibacterial activity against Gram-positive bacterium S.aureus. This chain is Brevinin-1Ba, found in Lithobates berlandieri (Rio Grande leopard frog).